Consider the following 318-residue polypeptide: Ribonuclease Z (318 aa).

His62, His64, Asp66, His67, His139, Asp210, and His268 together coordinate Zn(2+). The active-site Proton acceptor is Asp66.

It belongs to the RNase Z family. As to quaternary structure, homodimer. Requires Zn(2+) as cofactor.

It carries out the reaction Endonucleolytic cleavage of RNA, removing extra 3' nucleotides from tRNA precursor, generating 3' termini of tRNAs. A 3'-hydroxy group is left at the tRNA terminus and a 5'-phosphoryl group is left at the trailer molecule.. Its function is as follows. Zinc phosphodiesterase, which displays some tRNA 3'-processing endonuclease activity. Probably involved in tRNA maturation, by removing a 3'-trailer from precursor tRNA. This chain is Ribonuclease Z, found in Gloeothece citriformis (strain PCC 7424) (Cyanothece sp. (strain PCC 7424)).